The chain runs to 224 residues: Voltage-dependent calcium channel gamma-1 subunit (224 aa).

The Cytoplasmic portion of the chain corresponds to 1–10 (MSQTKALKVR). Residues 11–29 (VTLFCILVGIVLALVAVVT) form a helical membrane-spanning segment. The Extracellular segment spans residues 30–110 (DHWAVLSPHV…TQKEYSISAA (81 aa)). N-linked (GlcNAc...) asparagine glycosylation is found at Asn43 and Asn81. A disulfide bond links Cys57 and Cys82. Residues 111 to 131 (AIAIFSLGFIILGTICGLLSF) form a helical membrane-spanning segment. Topologically, residues 132-136 (RKKRD) are cytoplasmic. The helical transmembrane segment at 137-157 (YLLRPASMFYAFAGLCIFVSV) threads the bilayer. Residues 158–181 (EVMRQSVKRMIDSEDTVWIDYYYG) lie on the Extracellular side of the membrane. Residues 182 to 206 (WSFACACAAFILLFLGGIALLLFSL) traverse the membrane as a helical segment. Over 207–224 (PRMPQYPWESCMDAEPEH) the chain is Cytoplasmic.

It belongs to the PMP-22/EMP/MP20 family. CACNG subfamily. Component of a calcium channel complex consisting of a pore-forming alpha subunit (CACNA1S) and the ancillary subunits CACNB1 or CACNB2, CACNG1 and CACNA2D1. The channel complex contains alpha, beta, gamma and delta subunits in a 1:1:1:1 ratio, i.e. it contains either CACNB1 or CACNB2. N-glycosylated.

It localises to the cell membrane. The protein localises to the sarcolemma. Its function is as follows. Regulatory subunit of the voltage-gated calcium channel that gives rise to L-type calcium currents in skeletal muscle. Regulates channel inactivation kinetics. The sequence is that of Voltage-dependent calcium channel gamma-1 subunit (CACNG1) from Sus scrofa (Pig).